The primary structure comprises 235 residues: Probable GTP-binding protein EngB (235 aa).

One can recognise an EngB-type G domain in the interval 23–219 (QVPEIAFAGR…NDKIIELLGL (197 aa)). GTP-binding positions include 31 to 38 (GRSNAGKS), 58 to 62 (GRTQH), 92 to 95 (DLPG), 159 to 162 (TKSD), and 193 to 200 (FTAQMFSA). Mg(2+) is bound by residues S38 and T60.

The protein belongs to the TRAFAC class TrmE-Era-EngA-EngB-Septin-like GTPase superfamily. EngB GTPase family. It depends on Mg(2+) as a cofactor.

In terms of biological role, necessary for normal cell division and for the maintenance of normal septation. This Janthinobacterium sp. (strain Marseille) (Minibacterium massiliensis) protein is Probable GTP-binding protein EngB.